The sequence spans 161 residues: Probable chemoreceptor glutamine deamidase CheD (161 aa).

The protein belongs to the CheD family.

It carries out the reaction L-glutaminyl-[protein] + H2O = L-glutamyl-[protein] + NH4(+). In terms of biological role, probably deamidates glutamine residues to glutamate on methyl-accepting chemotaxis receptors (MCPs), playing an important role in chemotaxis. The chain is Probable chemoreceptor glutamine deamidase CheD from Syntrophomonas wolfei subsp. wolfei (strain DSM 2245B / Goettingen).